A 571-amino-acid polypeptide reads, in one-letter code: Mannan endo-1,4-beta-mannosidase B (571 aa).

An N-terminal signal peptide occupies residues 1–19; it reads MNSLSLLLFCIFFVFSTFA. The CBM6 domain maps to 22–141; sequence VYYEAENGKL…WMWVDAFVIN (120 aa). The region spanning 165 to 459 is the GH26 domain; sequence PAAKKLYDFL…FTHKTVMNMD (295 aa). Residue tryptophan 286 coordinates substrate. Glutamate 319 functions as the Proton donor in the catalytic mechanism. 2 residues coordinate substrate: tryptophan 324 and tyrosine 379. Glutamate 407 functions as the Nucleophile in the catalytic mechanism. CBM10 domains follow at residues 491–527 and 534–571; these read ECFS…CGIG and VCWS…CGII.

The protein belongs to the glycosyl hydrolase 26 family.

The catalysed reaction is Random hydrolysis of (1-&gt;4)-beta-D-mannosidic linkages in mannans, galactomannans and glucomannans.. The protein is Mannan endo-1,4-beta-mannosidase B (MANB) of Piromyces sp.